The primary structure comprises 409 residues: Tryptophan synthase beta chain 1 (409 aa).

Lysine 104 carries the post-translational modification N6-(pyridoxal phosphate)lysine.

The protein belongs to the TrpB family. Tetramer of two alpha and two beta chains. It depends on pyridoxal 5'-phosphate as a cofactor.

It carries out the reaction (1S,2R)-1-C-(indol-3-yl)glycerol 3-phosphate + L-serine = D-glyceraldehyde 3-phosphate + L-tryptophan + H2O. It participates in amino-acid biosynthesis; L-tryptophan biosynthesis; L-tryptophan from chorismate: step 5/5. Its function is as follows. The beta subunit is responsible for the synthesis of L-tryptophan from indole and L-serine. This is Tryptophan synthase beta chain 1 (trpB1) from Nostoc sp. (strain PCC 7120 / SAG 25.82 / UTEX 2576).